Here is a 97-residue protein sequence, read N- to C-terminus: uncharacterized protein (97 aa).

The span at 1–20 (MAKEQTDRTTLDLFAHERRP) shows a compositional bias: basic and acidic residues. A disordered region spans residues 1–30 (MAKEQTDRTTLDLFAHERRPGRPKTNPLSR).

This is an uncharacterized protein from Escherichia coli O157:H7.